Here is a 200-residue protein sequence, read N- to C-terminus: ATP-dependent Clp protease proteolytic subunit (200 aa).

Residue serine 105 is the Nucleophile of the active site. The active site involves histidine 130.

This sequence belongs to the peptidase S14 family. Fourteen ClpP subunits assemble into 2 heptameric rings which stack back to back to give a disk-like structure with a central cavity, resembling the structure of eukaryotic proteasomes.

Its subcellular location is the cytoplasm. The catalysed reaction is Hydrolysis of proteins to small peptides in the presence of ATP and magnesium. alpha-casein is the usual test substrate. In the absence of ATP, only oligopeptides shorter than five residues are hydrolyzed (such as succinyl-Leu-Tyr-|-NHMec, and Leu-Tyr-Leu-|-Tyr-Trp, in which cleavage of the -Tyr-|-Leu- and -Tyr-|-Trp bonds also occurs).. In terms of biological role, cleaves peptides in various proteins in a process that requires ATP hydrolysis. Has a chymotrypsin-like activity. Plays a major role in the degradation of misfolded proteins. This is ATP-dependent Clp protease proteolytic subunit from Hydrogenovibrio crunogenus (strain DSM 25203 / XCL-2) (Thiomicrospira crunogena).